Here is a 313-residue protein sequence, read N- to C-terminus: tRNA dimethylallyltransferase (313 aa).

10–17 is an ATP binding site; the sequence is GPTASGKT. 12 to 17 is a binding site for substrate; sequence TASGKT. Interaction with substrate tRNA regions lie at residues 35–38, 159–163, and 240–245; these read DSAM, QRIQR, and RCVGYR.

The protein belongs to the IPP transferase family. Monomer. Mg(2+) serves as cofactor.

It catalyses the reaction adenosine(37) in tRNA + dimethylallyl diphosphate = N(6)-dimethylallyladenosine(37) in tRNA + diphosphate. Its function is as follows. Catalyzes the transfer of a dimethylallyl group onto the adenine at position 37 in tRNAs that read codons beginning with uridine, leading to the formation of N6-(dimethylallyl)adenosine (i(6)A). The protein is tRNA dimethylallyltransferase of Legionella pneumophila (strain Paris).